The sequence spans 194 residues: ATP-dependent Clp protease proteolytic subunit (194 aa).

Serine 98 serves as the catalytic Nucleophile. Residue histidine 123 is part of the active site.

The protein belongs to the peptidase S14 family. Fourteen ClpP subunits assemble into 2 heptameric rings which stack back to back to give a disk-like structure with a central cavity, resembling the structure of eukaryotic proteasomes.

It localises to the cytoplasm. The enzyme catalyses Hydrolysis of proteins to small peptides in the presence of ATP and magnesium. alpha-casein is the usual test substrate. In the absence of ATP, only oligopeptides shorter than five residues are hydrolyzed (such as succinyl-Leu-Tyr-|-NHMec, and Leu-Tyr-Leu-|-Tyr-Trp, in which cleavage of the -Tyr-|-Leu- and -Tyr-|-Trp bonds also occurs).. Its function is as follows. Cleaves peptides in various proteins in a process that requires ATP hydrolysis. Has a chymotrypsin-like activity. Plays a major role in the degradation of misfolded proteins. The protein is ATP-dependent Clp protease proteolytic subunit of Sodalis glossinidius (strain morsitans).